Reading from the N-terminus, the 113-residue chain is Putative anti-sigma factor antagonist TM1081 homolog (113 aa).

The 110-residue stretch at 1-110 (MFPYKIVEDV…DTISEALEEV (110 aa)) folds into the STAS domain. A Phosphoserine modification is found at serine 55.

It belongs to the anti-sigma-factor antagonist family. In terms of processing, phosphorylated on a serine residue.

Functionally, in the phosphorylated form it could act as an anti-anti-sigma factor that counteracts an anti-sigma factor and thus releases a sigma factor from inhibition. This chain is Putative anti-sigma factor antagonist TM1081 homolog, found in Thermotoga neapolitana.